The chain runs to 306 residues: tRNA pseudouridine synthase B (306 aa).

The Nucleophile role is filled by Asp-43.

Belongs to the pseudouridine synthase TruB family. Type 1 subfamily.

It carries out the reaction uridine(55) in tRNA = pseudouridine(55) in tRNA. In terms of biological role, responsible for synthesis of pseudouridine from uracil-55 in the psi GC loop of transfer RNAs. The sequence is that of tRNA pseudouridine synthase B from Anaplasma marginale (strain St. Maries).